A 38-amino-acid chain; its full sequence is uncharacterized protein (38 aa).

This is an uncharacterized protein from Saccharomyces cerevisiae (strain ATCC 204508 / S288c) (Baker's yeast).